We begin with the raw amino-acid sequence, 248 residues long: Anamorsin homolog (248 aa).

Residues 4–130 are N-terminal SAM-like domain; sequence FKGLQKSLYI…ETGSSARLSF (127 aa). The interval 131–161 is linker; that stretch reads AKKTSSVNVWKISGDDEELIDEEELLDEEDK. [2Fe-2S] cluster is bound by residues C172, C181, C184, and C186. The tract at residues 172–186 is fe-S binding site A; that stretch reads CSTTGKRKACKNCSC. [4Fe-4S] cluster is bound by residues C209, C212, C220, and C223. 2 consecutive short sequence motifs (cx2C motif) follow at residues 209–212 and 220–223; these read CGNC and CSTC. Positions 209–223 are fe-S binding site B; the sequence is CGNCYLGDAFRCSTC.

This sequence belongs to the anamorsin family. In terms of assembly, monomer. [2Fe-2S] cluster serves as cofactor. The cofactor is [4Fe-4S] cluster.

It is found in the cytoplasm. The protein resides in the mitochondrion intermembrane space. Functionally, component of the cytosolic iron-sulfur (Fe-S) protein assembly (CIA) machinery. Required for the maturation of extramitochondrial Fe-S proteins. Part of an electron transfer chain functioning in an early step of cytosolic Fe-S biogenesis, facilitating the de novo assembly of a [4Fe-4S] cluster on the cytosolic Fe-S scaffold complex. Electrons are transferred from NADPH via a FAD- and FMN-containing diflavin oxidoreductase. Together with the diflavin oxidoreductase, also required for the assembly of the diferric tyrosyl radical cofactor of ribonucleotide reductase (RNR), probably by providing electrons for reduction during radical cofactor maturation in the catalytic small subunit. The polypeptide is Anamorsin homolog (Drosophila virilis (Fruit fly)).